Reading from the N-terminus, the 505-residue chain is Nicotinamide phosphoribosyltransferase (505 aa).

R196 is a binding site for diphosphate. D219 provides a ligand contact to beta-nicotinamide D-ribonucleotide. Diphosphate-binding residues include H246 and R314. Beta-nicotinamide D-ribonucleotide is bound by residues 314–316 (RPD), 369–370 (GD), and R408.

The protein belongs to the NAPRTase family.

The catalysed reaction is beta-nicotinamide D-ribonucleotide + diphosphate = 5-phospho-alpha-D-ribose 1-diphosphate + nicotinamide + H(+). The protein operates within cofactor biosynthesis; NAD(+) biosynthesis; nicotinamide D-ribonucleotide from 5-phospho-alpha-D-ribose 1-diphosphate and nicotinamide: step 1/1. 10-fold more active in the presence of saturating ATP. Its function is as follows. Catalyzes the condensation of nicotinamide with 5-phosphoribosyl-1-pyrophosphate to yield nicotinamide mononucleotide, an intermediate in the biosynthesis of NAD. Functions in the nondeamidating salvage pathway for production of NAD from nicotinamide. Displays a strict preference for nicotinamide over nicotinate substrate. The protein is Nicotinamide phosphoribosyltransferase of Acinetobacter baylyi (strain ATCC 33305 / BD413 / ADP1).